The sequence spans 330 residues: Aspartate--ammonia ligase (330 aa).

The protein belongs to the class-II aminoacyl-tRNA synthetase family. AsnA subfamily.

Its subcellular location is the cytoplasm. The enzyme catalyses L-aspartate + NH4(+) + ATP = L-asparagine + AMP + diphosphate + H(+). It participates in amino-acid biosynthesis; L-asparagine biosynthesis; L-asparagine from L-aspartate (ammonia route): step 1/1. This is Aspartate--ammonia ligase from Yersinia enterocolitica serotype O:8 / biotype 1B (strain NCTC 13174 / 8081).